A 271-amino-acid chain; its full sequence is Glutamate racemase (271 aa).

Residues 10–11 (DS) and 42–43 (YG) each bind substrate. The Proton donor/acceptor role is filled by C74. 75 to 76 (NT) contributes to the substrate binding site. C189 serves as the catalytic Proton donor/acceptor. Residue 190–191 (TH) coordinates substrate.

Belongs to the aspartate/glutamate racemases family.

The catalysed reaction is L-glutamate = D-glutamate. Its pathway is cell wall biogenesis; peptidoglycan biosynthesis. Provides the (R)-glutamate required for cell wall biosynthesis. This chain is Glutamate racemase, found in Bartonella bacilliformis (strain ATCC 35685 / KC583 / Herrer 020/F12,63).